Reading from the N-terminus, the 142-residue chain is Small ribosomal subunit protein uS11 (142 aa).

Positions 1 to 21 are disordered; that stretch reads MPPKTRGAVRKPRRKDKKNIA. Residues 7–17 show a composition bias toward basic residues; it reads GAVRKPRRKDK.

The protein belongs to the universal ribosomal protein uS11 family. In terms of assembly, part of the 30S ribosomal subunit. Interacts with proteins S7 and S18. Binds to IF-3.

Located on the platform of the 30S subunit, it bridges several disparate RNA helices of the 16S rRNA. Forms part of the Shine-Dalgarno cleft in the 70S ribosome. The polypeptide is Small ribosomal subunit protein uS11 (Paenarthrobacter aurescens (strain TC1)).